The following is a 166-amino-acid chain: Glutamyl-tRNA(Gln) amidotransferase subunit C, mitochondrial (166 aa).

The N-terminal 44 residues, 1-44 (MIRGWTIFTLCKPSALVGSSHFNKQFNWAKSQLQFATKVPQQPY), are a transit peptide targeting the mitochondrion.

Belongs to the GatC family. In terms of assembly, subunit of the heterotrimeric GatCAB amidotransferase (AdT) complex, composed of A, B and C subunits.

The protein localises to the mitochondrion. It catalyses the reaction L-glutamyl-tRNA(Gln) + L-glutamine + ATP + H2O = L-glutaminyl-tRNA(Gln) + L-glutamate + ADP + phosphate + H(+). Functionally, allows the formation of correctly charged Gln-tRNA(Gln) through the transamidation of misacylated Glu-tRNA(Gln) in the mitochondria. The reaction takes place in the presence of glutamine and ATP through an activated gamma-phospho-Glu-tRNA(Gln). The protein is Glutamyl-tRNA(Gln) amidotransferase subunit C, mitochondrial of Anopheles darlingi (Mosquito).